A 225-amino-acid polypeptide reads, in one-letter code: UPF0758 protein BCG9842_B0662 (225 aa).

An MPN domain is found at 103–225; that stretch reads SIRSPEDCAK…FVSLKEKGHI (123 aa). Zn(2+) contacts are provided by H174, H176, and D187. Residues 174 to 187 carry the JAMM motif motif; it reads HNHPSGDPTPSRED.

The protein belongs to the UPF0758 family.

The sequence is that of UPF0758 protein BCG9842_B0662 from Bacillus cereus (strain G9842).